We begin with the raw amino-acid sequence, 391 residues long: Saxitoxin and tetrodotoxin-binding protein 2 (391 aa).

The signal sequence occupies residues Met-1–Ala-20. 2 tandem repeats follow at residues Pro-24–Ser-202 and Pro-203–Asp-391. N-linked (GlcNAc...) asparagine glycosylation is found at Asn-41, Asn-54, Asn-63, Asn-97, Asn-234, Asn-268, Asn-277, and Asn-307.

In terms of assembly, homodimer or heterodimer of PSTBP1 and PSTBP2. In terms of processing, glycosylated.

Its subcellular location is the secreted. Functionally, binds both saxitoxin and tetradotoxin. May play a role in toxin accumulation and/or excretion. The polypeptide is Saxitoxin and tetrodotoxin-binding protein 2 (psbp2) (Takifugu pardalis (Panther puffer)).